The following is a 704-amino-acid chain: Elongation factor G (704 aa).

Residues 8–290 (EKYRNIGICA…GVVRYLPAPN (283 aa)) form the tr-type G domain. Residues 17 to 24 (AHVDAGKT), 88 to 92 (DTPGH), and 142 to 145 (NKMD) each bind GTP.

Belongs to the TRAFAC class translation factor GTPase superfamily. Classic translation factor GTPase family. EF-G/EF-2 subfamily.

The protein localises to the cytoplasm. In terms of biological role, catalyzes the GTP-dependent ribosomal translocation step during translation elongation. During this step, the ribosome changes from the pre-translocational (PRE) to the post-translocational (POST) state as the newly formed A-site-bound peptidyl-tRNA and P-site-bound deacylated tRNA move to the P and E sites, respectively. Catalyzes the coordinated movement of the two tRNA molecules, the mRNA and conformational changes in the ribosome. The protein is Elongation factor G of Francisella tularensis subsp. mediasiatica (strain FSC147).